Reading from the N-terminus, the 155-residue chain is Ribosomal RNA large subunit methyltransferase H (155 aa).

Residues leucine 73, glycine 104, and 123–128 contribute to the S-adenosyl-L-methionine site; that span reads LSPLTL.

It belongs to the RNA methyltransferase RlmH family. As to quaternary structure, homodimer.

Its subcellular location is the cytoplasm. The enzyme catalyses pseudouridine(1915) in 23S rRNA + S-adenosyl-L-methionine = N(3)-methylpseudouridine(1915) in 23S rRNA + S-adenosyl-L-homocysteine + H(+). Specifically methylates the pseudouridine at position 1915 (m3Psi1915) in 23S rRNA. This chain is Ribosomal RNA large subunit methyltransferase H, found in Pseudomonas aeruginosa (strain UCBPP-PA14).